The sequence spans 780 residues: Aconitate hydratase, mitochondrial (780 aa).

The transit peptide at 1–27 (MAPYSLLVTRLQKALGVRQYHVASVLC) directs the protein to the mitochondrion. An N6-succinyllysine modification is found at Lys31. N6-acetyllysine; alternate is present on Lys50. Lys50 bears the N6-succinyllysine; alternate mark. Gln99 contacts substrate. 2 positions are modified to N6-acetyllysine; alternate: Lys138 and Lys144. Residues Lys138 and Lys144 each carry the N6-succinyllysine; alternate modification. 192 to 194 (DSH) serves as a coordination point for substrate. Lys233 carries the post-translational modification N6-acetyllysine; alternate. Lys233 bears the N6-succinyllysine; alternate mark. Cys385 provides a ligand contact to [4Fe-4S] cluster. Lys411 carries the N6-succinyllysine modification. Residues Cys448 and Cys451 each contribute to the [4Fe-4S] cluster site. Substrate contacts are provided by Arg474 and Arg479. N6-acetyllysine; alternate is present on residues Lys517 and Lys523. N6-succinyllysine; alternate is present on residues Lys517 and Lys523. Residues 524 to 537 (LEAPDADELPRSDF) are compositionally biased toward basic and acidic residues. Residues 524–560 (LEAPDADELPRSDFDPGQDTYQHPPKDSSGQRVDVSP) are disordered. Position 549 is an N6-succinyllysine (Lys549). Over residues 551 to 560 (SSGQRVDVSP) the composition is skewed to polar residues. Residue Ser559 is modified to Phosphoserine. The residue at position 573 (Lys573) is an N6-acetyllysine; alternate. The residue at position 573 (Lys573) is an N6-succinyllysine; alternate. 2 positions are modified to N6-succinyllysine: Lys577 and Lys591. Lys605 is modified (N6-acetyllysine; alternate). N6-succinyllysine; alternate is present on Lys605. Arg607 provides a ligand contact to substrate. At Lys628 the chain carries N6-succinyllysine. The residue at position 670 (Ser670) is a Phosphoserine. Substrate is bound at residue 670-671 (SR). Lys689 is subject to N6-succinyllysine. N6-acetyllysine; alternate is present on residues Lys723 and Lys730. N6-succinyllysine; alternate occurs at positions 723 and 730. An N6-acetyllysine mark is found at Lys736, Lys739, and Lys743.

It belongs to the aconitase/IPM isomerase family. Monomer. The cofactor is [4Fe-4S] cluster. Post-translationally, forms covalent cross-links mediated by transglutaminase TGM2, between a glutamine and the epsilon-amino group of a lysine residue, forming homopolymers and heteropolymers.

The protein localises to the mitochondrion. The enzyme catalyses citrate = D-threo-isocitrate. Its pathway is carbohydrate metabolism; tricarboxylic acid cycle; isocitrate from oxaloacetate: step 2/2. In terms of biological role, catalyzes the isomerization of citrate to isocitrate via cis-aconitate. The protein is Aconitate hydratase, mitochondrial (Aco2) of Mus musculus (Mouse).